The chain runs to 420 residues: MAKFDILEDLKWRGAINQETDEEGLRKYLAEHDDLALYCGTDPTGDSLHIGHLIPFMILKRFQMAGYHPVILIGGGTGAIGDPSGRKTERTLQTAEQVKHNEEKLTAQMKKLFGTENFEIRNNAEWLGKMNLLDFLRDYGKFFQVNNMINKDVVASRLENGISFTEFSYQILQAIDFYHLNKDNGVQMQIGGSDQWGNITAGIDLIHKLDGSDRPAFGLTIPLMLKADGTKFGKSAGGAVWLDPEKTSPYEFYQFWINQDDRDVVKYLKYFTFLSREEIEDLAEKTEKEPWKRAAQKRLAEEVTKFVHGEEGLKEAQIITEALFSGNVKSLSVPQIEQALKNAPSAEATHEAKNIVEFLVETKIEPSKRQAREDVKNGAIYVNGERQDDIDFIIEPDSDFDGKYVIIRKGKRKYTLVKIK.

Position 38 (Tyr-38) interacts with L-tyrosine. The short motif at 43 to 52 (PTGDSLHIGH) is the 'HIGH' region element. The L-tyrosine site is built by Tyr-169 and Gln-173. Residues 231 to 235 (KFGKS) carry the 'KMSKS' region motif. Lys-234 contributes to the ATP binding site. Residues 353-419 (KNIVEFLVET…GKRKYTLVKI (67 aa)) enclose the S4 RNA-binding domain.

This sequence belongs to the class-I aminoacyl-tRNA synthetase family. TyrS type 1 subfamily. As to quaternary structure, homodimer.

It is found in the cytoplasm. The catalysed reaction is tRNA(Tyr) + L-tyrosine + ATP = L-tyrosyl-tRNA(Tyr) + AMP + diphosphate + H(+). Functionally, catalyzes the attachment of tyrosine to tRNA(Tyr) in a two-step reaction: tyrosine is first activated by ATP to form Tyr-AMP and then transferred to the acceptor end of tRNA(Tyr). This is Tyrosine--tRNA ligase from Lactobacillus johnsonii (strain CNCM I-12250 / La1 / NCC 533).